The primary structure comprises 742 residues: Glucosylceramidase (742 aa).

Residues Asn37 and Asn160 are each glycosylated (N-linked (GlcNAc...) asparagine). The Proton donor role is filled by Glu258. N-linked (GlcNAc...) asparagine glycosylation occurs at Asn388. The Nucleophile role is filled by Glu492. 3 N-linked (GlcNAc...) asparagine glycosylation sites follow: Asn552, Asn560, and Asn698. A helical transmembrane segment spans residues 701 to 721 (IAQILVAVVILLLGVLVAYYA).

Belongs to the glycosyl hydrolase 5 (cellulase A) family.

It localises to the membrane. It carries out the reaction a beta-D-glucosyl-(1&lt;-&gt;1')-N-acylsphing-4-enine + H2O = an N-acylsphing-4-enine + D-glucose. Functionally, specifically hydrolyzes the glucosidic linkage in glucosylceramide. May prevent accumulation of aberrent glucosylceramide containing immature ceramide. The sequence is that of Glucosylceramidase from Cryptococcus neoformans var. grubii serotype A (strain H99 / ATCC 208821 / CBS 10515 / FGSC 9487) (Filobasidiella neoformans var. grubii).